The sequence spans 126 residues: Large ribosomal subunit protein bL20 (126 aa).

Belongs to the bacterial ribosomal protein bL20 family.

Its function is as follows. Binds directly to 23S ribosomal RNA and is necessary for the in vitro assembly process of the 50S ribosomal subunit. It is not involved in the protein synthesizing functions of that subunit. This is Large ribosomal subunit protein bL20 from Buchnera aphidicola subsp. Baizongia pistaciae (strain Bp).